The chain runs to 106 residues: Nucleoid-associated protein DP1429 (106 aa).

It belongs to the YbaB/EbfC family. Homodimer.

The protein localises to the cytoplasm. The protein resides in the nucleoid. Functionally, binds to DNA and alters its conformation. May be involved in regulation of gene expression, nucleoid organization and DNA protection. This Desulfotalea psychrophila (strain LSv54 / DSM 12343) protein is Nucleoid-associated protein DP1429.